The following is a 270-amino-acid chain: Interleukin-33 (270 aa).

The segment at 1–65 (MKPKMKYSTN…EACYFRRETT (65 aa)) is homeodomain-like HTH domain. A propeptide spanning residues 1–94 (MKPKMKYSTN…CQQQSTVECF (94 aa)) is cleaved from the precursor. The interaction with RELA stretch occupies residues 64–111 (TTKRPSLKTGRKHKRHLVLAACQQQSTVECFAFGISGVQKYTRALHDS).

The protein belongs to the IL-1 family. Highly divergent. As to quaternary structure, forms a 1:1:1 heterotrimeric complex with its primary high-affinity receptor IL1RL1 and the coreceptor IL1RAP. Interacts with cargo receptor TMED10; the interaction mediates the translocation from the cytoplasm into the ERGIC (endoplasmic reticulum-Golgi intermediate compartment) and thereby secretion. (Microbial infection) Interacts (in reduced form) with H.polygyrus ARI. In terms of processing, the full-length protein can be released from cells and is able to signal via the IL1RL1/ST2 receptor. However, proteolytic processing by CELA1, CSTG/cathepsin G and ELANE/neutrophil elastase produces C-terminal peptides that are more active than the unprocessed full length protein. May also be proteolytically processed by calpains. Proteolytic cleavage mediated by apoptotic caspases including CASP3 and CASP7 results in IL33 inactivation. In vitro proteolytic cleavage by CASP1 was reported but could not be confirmed in vivo suggesting that IL33 is probably not a direct substrate for that caspase. As to expression, expressed at high level in high endothelial venules found in tonsils, Peyer patches and mesenteric lymph nodes. Almost undetectable in placenta.

Its subcellular location is the nucleus. It is found in the chromosome. The protein localises to the cytoplasm. The protein resides in the cytoplasmic vesicle. It localises to the secretory vesicle. Its subcellular location is the secreted. Cytokine that binds to and signals through the IL1RL1/ST2 receptor which in turn activates NF-kappa-B and MAPK signaling pathways in target cells. Involved in the maturation of Th2 cells inducing the secretion of T-helper type 2-associated cytokines. Also involved in activation of mast cells, basophils, eosinophils and natural killer cells. Acts as an enhancer of polarization of alternatively activated macrophages. Acts as a chemoattractant for Th2 cells, and may function as an 'alarmin', that amplifies immune responses during tissue injury. Induces rapid UCP2-dependent mitochondrial rewiring that attenuates the generation of reactive oxygen species and preserves the integrity of Krebs cycle required for persistent production of itaconate and subsequent GATA3-dependent differentiation of inflammation-resolving alternatively activated macrophages. In terms of biological role, in quiescent endothelia the uncleaved form is constitutively and abundantly expressed, and acts as a chromatin-associated nuclear factor with transcriptional repressor properties, it may sequester nuclear NF-kappaB/RELA, lowering expression of its targets. This form is rapidely lost upon angiogenic or pro-inflammatory activation. This chain is Interleukin-33, found in Homo sapiens (Human).